The sequence spans 127 residues: Protein yippee-like 4 (127 aa).

Residues R27–N124 enclose the Yippee domain. Zn(2+)-binding residues include C31, C34, C87, and C90. A phosphothreonine mark is found at T92 and T93. Y98 carries the post-translational modification Phosphotyrosine.

The protein belongs to the yippee family. In terms of tissue distribution, detected in brain, spleen and testis.

The protein localises to the nucleus. The protein resides in the nucleolus. The polypeptide is Protein yippee-like 4 (Ypel4) (Mus musculus (Mouse)).